Reading from the N-terminus, the 172-residue chain is Crossover junction endodeoxyribonuclease RuvC (172 aa).

Residues Asp-7, Glu-68, and Asp-141 contribute to the active site. Residues Asp-7, Glu-68, and Asp-141 each contribute to the Mg(2+) site.

It belongs to the RuvC family. In terms of assembly, homodimer which binds Holliday junction (HJ) DNA. The HJ becomes 2-fold symmetrical on binding to RuvC with unstacked arms; it has a different conformation from HJ DNA in complex with RuvA. In the full resolvosome a probable DNA-RuvA(4)-RuvB(12)-RuvC(2) complex forms which resolves the HJ. Mg(2+) is required as a cofactor.

It localises to the cytoplasm. It carries out the reaction Endonucleolytic cleavage at a junction such as a reciprocal single-stranded crossover between two homologous DNA duplexes (Holliday junction).. In terms of biological role, the RuvA-RuvB-RuvC complex processes Holliday junction (HJ) DNA during genetic recombination and DNA repair. Endonuclease that resolves HJ intermediates. Cleaves cruciform DNA by making single-stranded nicks across the HJ at symmetrical positions within the homologous arms, yielding a 5'-phosphate and a 3'-hydroxyl group; requires a central core of homology in the junction. The consensus cleavage sequence is 5'-(A/T)TT(C/G)-3'. Cleavage occurs on the 3'-side of the TT dinucleotide at the point of strand exchange. HJ branch migration catalyzed by RuvA-RuvB allows RuvC to scan DNA until it finds its consensus sequence, where it cleaves and resolves the cruciform DNA. This chain is Crossover junction endodeoxyribonuclease RuvC, found in Frankia casuarinae (strain DSM 45818 / CECT 9043 / HFP020203 / CcI3).